The following is a 105-amino-acid chain: uncharacterized protein (105 aa).

Residues 31-47 (SVNLPSPSVKPSVTPSV) are compositionally biased toward low complexity. Positions 31–80 (SVNLPSPSVKPSVTPSVKKPPHVIRSDYSKPREKPAKVAKKPTVKNDKKP) are disordered. Basic and acidic residues predominate over residues 54–66 (IRSDYSKPREKPA).

This is an uncharacterized protein from Caenorhabditis elegans.